A 489-amino-acid chain; its full sequence is Glutamyl-tRNA(Gln) amidotransferase subunit A (489 aa).

Catalysis depends on charge relay system residues lysine 80 and serine 160. The active-site Acyl-ester intermediate is the serine 184.

It belongs to the amidase family. GatA subfamily. In terms of assembly, heterotrimer of A, B and C subunits.

It carries out the reaction L-glutamyl-tRNA(Gln) + L-glutamine + ATP + H2O = L-glutaminyl-tRNA(Gln) + L-glutamate + ADP + phosphate + H(+). Its function is as follows. Allows the formation of correctly charged Gln-tRNA(Gln) through the transamidation of misacylated Glu-tRNA(Gln) in organisms which lack glutaminyl-tRNA synthetase. The reaction takes place in the presence of glutamine and ATP through an activated gamma-phospho-Glu-tRNA(Gln). This chain is Glutamyl-tRNA(Gln) amidotransferase subunit A, found in Wolbachia pipientis wMel.